A 593-amino-acid polypeptide reads, in one-letter code: Cell surface glycoprotein (593 aa).

An N-terminal signal peptide occupies residues 1-22 (MRKFTLLMLLLIVISMSGIAGA). 19 N-linked (GalNAc...) asparagine glycosylation sites follow: Asn-29, Asn-58, Asn-66, Asn-74, Asn-114, Asn-122, Asn-145, Asn-148, Asn-158, Asn-176, Asn-208, Asn-231, Asn-326, Asn-336, Asn-340, Asn-431, Asn-471, Asn-500, and Asn-516.

In terms of processing, N-glycosylated; contains glycans composed of methyl-Man, Man and GalNAc residues in a molar ratio of 2:3:1.

Its subcellular location is the secreted. The protein localises to the cell wall. It is found in the S-layer. Functionally, the S-layer is a paracrystalline mono-layered assembly of proteins which coat the surface of the cell. The chain is Cell surface glycoprotein (slgA) from Methanothermus fervidus (strain ATCC 43054 / DSM 2088 / JCM 10308 / V24 S).